Consider the following 279-residue polypeptide: Release factor glutamine methyltransferase (279 aa).

The S-adenosyl-L-methionine site is built by glutamate 141 and asparagine 187. 187–190 provides a ligand contact to substrate; it reads NPPY.

It belongs to the protein N5-glutamine methyltransferase family. PrmC subfamily.

The catalysed reaction is L-glutaminyl-[peptide chain release factor] + S-adenosyl-L-methionine = N(5)-methyl-L-glutaminyl-[peptide chain release factor] + S-adenosyl-L-homocysteine + H(+). Its function is as follows. Methylates the class 1 translation termination release factors RF1/PrfA and RF2/PrfB on the glutamine residue of the universally conserved GGQ motif. The sequence is that of Release factor glutamine methyltransferase from Corynebacterium glutamicum (strain ATCC 13032 / DSM 20300 / JCM 1318 / BCRC 11384 / CCUG 27702 / LMG 3730 / NBRC 12168 / NCIMB 10025 / NRRL B-2784 / 534).